Consider the following 309-residue polypeptide: Homoserine O-succinyltransferase (309 aa).

Cysteine 142 (acyl-thioester intermediate) is an active-site residue. Substrate contacts are provided by lysine 163 and serine 192. The active-site Proton acceptor is histidine 235. Residue glutamate 237 is part of the active site. Residue arginine 249 coordinates substrate.

The protein belongs to the MetA family. In terms of assembly, homodimer.

It localises to the cytoplasm. It carries out the reaction L-homoserine + succinyl-CoA = O-succinyl-L-homoserine + CoA. It participates in amino-acid biosynthesis; L-methionine biosynthesis via de novo pathway; O-succinyl-L-homoserine from L-homoserine: step 1/1. Transfers a succinyl group from succinyl-CoA to L-homoserine, forming succinyl-L-homoserine. The chain is Homoserine O-succinyltransferase from Escherichia coli (strain K12 / MC4100 / BW2952).